A 126-amino-acid chain; its full sequence is Aspartate 1-decarboxylase (126 aa).

The active-site Schiff-base intermediate with substrate; via pyruvic acid is serine 25. Serine 25 carries the pyruvic acid (Ser) modification. Position 57 (threonine 57) interacts with substrate. Residue tyrosine 58 is the Proton donor of the active site. 73-75 (GGA) provides a ligand contact to substrate.

This sequence belongs to the PanD family. In terms of assembly, heterooctamer of four alpha and four beta subunits. Requires pyruvate as cofactor. Is synthesized initially as an inactive proenzyme, which is activated by self-cleavage at a specific serine bond to produce a beta-subunit with a hydroxyl group at its C-terminus and an alpha-subunit with a pyruvoyl group at its N-terminus.

The protein resides in the cytoplasm. The catalysed reaction is L-aspartate + H(+) = beta-alanine + CO2. The protein operates within cofactor biosynthesis; (R)-pantothenate biosynthesis; beta-alanine from L-aspartate: step 1/1. In terms of biological role, catalyzes the pyruvoyl-dependent decarboxylation of aspartate to produce beta-alanine. In Acinetobacter baylyi (strain ATCC 33305 / BD413 / ADP1), this protein is Aspartate 1-decarboxylase.